We begin with the raw amino-acid sequence, 588 residues long: Phenol 2-monooxygenase fsqG (588 aa).

FAD is bound by residues D9–W38, P17–A18, D37–K39, T45–G50, Y232, A289–D299, D299, and G309–N313. Residues D49 and Y232 each coordinate substrate.

It belongs to the PheA/TfdB FAD monooxygenase family. In terms of assembly, homodimer. Requires FAD as cofactor.

The protein operates within secondary metabolite biosynthesis. Its function is as follows. Phenol 2-monooxygenase; part of the gene cluster that mediates the biosynthesis of the isoquinoline alkaloids fumisoquin A, fumisoquin B and fumisoquin C; as well as small amounts of fumipyrrole as a shunt metabolite. The products of the cluster lead to a brown coloration and are important for growth and conidiation. The nonribosomal peptide synthetase-like protein fsqF, which lacks a canonical condensation domain, is required for addition of a serine-derived dehydroalanine moiety to activated tyrosine but is not essential for the subsequent steps leading to isoquinoline formation. A different enzyme, most likely the ATP-grasp enzyme fsqD, is responsible for activation of tyrosine. Three additional enzymes encoded by the fsq cluster, the N-methyltransferase fsqC, the phenol 2-monooxygenase fsqG and the FAD-dependent oxidase fsqB, catalyze the formation of the isoquinoline ring system in the fumisoquins. FsqB converts the fspF thiolation domain-bound (2S,4S,5S)-2-amino-6-(3,4-dihydroxyphenyl)-4-hydroxy-5-(methylamino)hexanoyl into isoquinoline. The cyclization most likely proceeds via a two-step mechanism, beginning with FAD-dependent oxidation of the methyl group to an iminium species followed by electrophilic attack on the deprotonated phenol. This is Phenol 2-monooxygenase fsqG from Aspergillus fumigatus (strain ATCC MYA-4609 / CBS 101355 / FGSC A1100 / Af293) (Neosartorya fumigata).